Here is an 851-residue protein sequence, read N- to C-terminus: B-box type zinc finger protein ncl-1 (851 aa).

Residues 71–91 (GFGFGSPSSTTSSSPPLSNSP) are disordered. Positions 76–91 (SPSSTTSSSPPLSNSP) are enriched in low complexity. A B box-type 1; atypical zinc finger spans residues 127-174 (VPAVHCSGCKSNETATSFCQDCNANLCDNCTMAHKFMHCFADHRVVSL). Cys132, Cys135, Cys156, and His160 together coordinate Zn(2+). Positions 176 to 197 (TPGTGSSSSSTSSSSSASSTSS) are enriched in low complexity. Positions 176–211 (TPGTGSSSSSTSSSSSASSTSSHQVPSLGGKQSPDS) are disordered. The B box-type 2 zinc finger occupies 218–261 (KRSVLCLQHRASELVFFCVSCNLAICRDCTVSDHPSGTHQYELI). Positions 223, 226, 246, and 251 each coordinate Zn(2+). A coiled-coil region spans residues 303 to 331 (SLHNAHAQLEETVSNLINVIQDQKKTLAK). NHL repeat units lie at residues 573-616 (HCKF…FDKE), 620-665 (KFQF…YNQY), 666-707 (GQFL…FDMF), 708-750 (GNIL…FSYE), and 751-794 (GQYL…FSQD).

Present in cells in which nucleoli are absent, and absent from large cells in which nucleoli are prominent. Highly expressed in the gonads.

The protein resides in the cytoplasm. Translational repressor that inhibits protein synthesis. Represses the translation of mRNAs such as fib-1, probably by being recruited by RNA-binding protein nos-2 and the Pumilio proteins puf-5, puf-8 and puf-9 to the consensus core PUF binding motif in the 3'-UTR of fib-1 mRNA. Negatively regulates ribosomal RNA (rRNA) synthesis, ribosomal protein synthesis and nucleolus size. Its role in the negative regulation of nucleolus size is most likely through its negative regulation of the translation of proteins such as the rRNA 2'-O-methyltransferase fib-1, and dao-5. Might act directly as a transcription factor to inhibit RNA polymerase I (rRNA) and III (5S RNA) transcription. Plays a role in embryonic development, and in particular, is involved in regulating the localization of proteins, such as par-2, that are required for embryonic cell polarity. Plays a role in the regulation of lifespan, and the response to nutrient availability. In Caenorhabditis elegans, this protein is B-box type zinc finger protein ncl-1.